The sequence spans 446 residues: Probable cytosolic iron-sulfur protein assembly protein 1 (446 aa).

WD repeat units follow at residues 17–59 (AFKP…AHSN), 63–106 (GHTR…PLEE), 143–182 (GHENEIKSAAFSPSGQYLATCSRDKSIWIWEDVGANEGDD), 192–241 (EHDG…EWAC), 247–291 (GHSS…PEAS), 330–368 (VHTRDIYSASWSKNGRVASTGSDGSILVYEECAPSNPST), and 398–446 (GHGP…SIEL). The span at 106–128 (EGTKKGESTEIDVTRRRNNNDSD) shows a compositional bias: basic and acidic residues. The disordered stretch occupies residues 106 to 133 (EGTKKGESTEIDVTRRRNNNDSDKDNDD).

This sequence belongs to the WD repeat CIA1 family.

Its function is as follows. Essential component of the cytosolic iron-sulfur (Fe/S) protein assembly machinery. Required for the maturation of extramitochondrial Fe/S proteins. The polypeptide is Probable cytosolic iron-sulfur protein assembly protein 1 (Pyricularia oryzae (strain 70-15 / ATCC MYA-4617 / FGSC 8958) (Rice blast fungus)).